The sequence spans 198 residues: Holliday junction branch migration complex subunit RuvA (198 aa).

Residues 1–64 form a domain I region; sequence MYEYIKGKYI…EDFIGLYGFD (64 aa). Residues 65–143 form a domain II region; that stretch reads SKEELEMFKL…PDELVDSSLE (79 aa). The interval 144–149 is flexible linker; the sequence is IDTKDN. Residues 150–198 are domain III; sequence ENVMALSEALSALIALGYSEKEAESVLKKIDKNDSVENIIKNALKALMG.

This sequence belongs to the RuvA family. In terms of assembly, homotetramer. Forms an RuvA(8)-RuvB(12)-Holliday junction (HJ) complex. HJ DNA is sandwiched between 2 RuvA tetramers; dsDNA enters through RuvA and exits via RuvB. An RuvB hexamer assembles on each DNA strand where it exits the tetramer. Each RuvB hexamer is contacted by two RuvA subunits (via domain III) on 2 adjacent RuvB subunits; this complex drives branch migration. In the full resolvosome a probable DNA-RuvA(4)-RuvB(12)-RuvC(2) complex forms which resolves the HJ.

The protein localises to the cytoplasm. The RuvA-RuvB-RuvC complex processes Holliday junction (HJ) DNA during genetic recombination and DNA repair, while the RuvA-RuvB complex plays an important role in the rescue of blocked DNA replication forks via replication fork reversal (RFR). RuvA specifically binds to HJ cruciform DNA, conferring on it an open structure. The RuvB hexamer acts as an ATP-dependent pump, pulling dsDNA into and through the RuvAB complex. HJ branch migration allows RuvC to scan DNA until it finds its consensus sequence, where it cleaves and resolves the cruciform DNA. The protein is Holliday junction branch migration complex subunit RuvA of Clostridium beijerinckii (strain ATCC 51743 / NCIMB 8052) (Clostridium acetobutylicum).